A 73-amino-acid polypeptide reads, in one-letter code: Conotoxin CnIIIG (73 aa).

A signal peptide spans 1-19 (MSKLGVLLTICLLLLPLTA). Residues 20-48 (LPMDEDQPADQPADRMQDDISSEQYPLFD) constitute a propeptide that is removed on maturation. Glutamine 51 is modified (pyrrolidone carboxylic acid). Intrachain disulfides connect cysteine 53/cysteine 72, cysteine 54/cysteine 70, and cysteine 60/cysteine 73.

It belongs to the conotoxin M superfamily. Expressed by the venom duct.

Its subcellular location is the secreted. Functionally, shows a paralytic effect in fish. This is Conotoxin CnIIIG from Conus consors (Singed cone).